We begin with the raw amino-acid sequence, 359 residues long: Biotin synthase (359 aa).

The interval 1–23 is disordered; sequence MSVADSSAADSVAAPDTADTSSS. A Radical SAM core domain is found at 76-302; the sequence is YFGNTVQLYF…VNPDRELRIA (227 aa). C94, C98, and C101 together coordinate [4Fe-4S] cluster. [2Fe-2S] cluster contacts are provided by C138, C170, C230, and R300.

This sequence belongs to the radical SAM superfamily. Biotin synthase family. In terms of assembly, homodimer. The cofactor is [4Fe-4S] cluster. Requires [2Fe-2S] cluster as cofactor.

The enzyme catalyses (4R,5S)-dethiobiotin + (sulfur carrier)-SH + 2 reduced [2Fe-2S]-[ferredoxin] + 2 S-adenosyl-L-methionine = (sulfur carrier)-H + biotin + 2 5'-deoxyadenosine + 2 L-methionine + 2 oxidized [2Fe-2S]-[ferredoxin]. It participates in cofactor biosynthesis; biotin biosynthesis; biotin from 7,8-diaminononanoate: step 2/2. Functionally, catalyzes the conversion of dethiobiotin (DTB) to biotin by the insertion of a sulfur atom into dethiobiotin via a radical-based mechanism. This Rhodopirellula baltica (strain DSM 10527 / NCIMB 13988 / SH1) protein is Biotin synthase.